Here is a 125-residue protein sequence, read N- to C-terminus: Fluoride-specific ion channel FluC (125 aa).

The next 3 membrane-spanning stretches (helical) occupy residues 36–56, 65–85, and 99–119; these read GTIF…FLSI, FILF…TFAY, and IIYF…GMFL. Na(+) contacts are provided by glycine 75 and threonine 78.

This sequence belongs to the fluoride channel Fluc/FEX (TC 1.A.43) family.

The protein localises to the cell inner membrane. The enzyme catalyses fluoride(in) = fluoride(out). Its activity is regulated as follows. Na(+) is not transported, but it plays an essential structural role and its presence is essential for fluoride channel function. Functionally, fluoride-specific ion channel. Important for reducing fluoride concentration in the cell, thus reducing its toxicity. The sequence is that of Fluoride-specific ion channel FluC from Thermosipho africanus (strain TCF52B).